The chain runs to 94 residues: Small ribosomal subunit protein bS16 (94 aa).

It belongs to the bacterial ribosomal protein bS16 family.

The chain is Small ribosomal subunit protein bS16 from Thermosipho africanus (strain TCF52B).